A 322-amino-acid chain; its full sequence is CXXC-type zinc finger protein 5 (322 aa).

The segment covering 1-10 (MSSLGGGSQD) has biased composition (gly residues). Positions 1-100 (MSSLGGGSQD…SGGGSMMGGE (100 aa)) are disordered. Composition is skewed to low complexity over residues 11 to 20 (AGGSSSSSTN) and 28 to 52 (SGPK…VADD). T53 is subject to Phosphothreonine. The span at 87–97 (SSGGSGGGSMM) shows a compositional bias: gly residues. A CXXC-type zinc finger spans residues 256 to 297 (GKKKRKRCGMCAPCRRRINCEQCSSCRNRKTGHQICKFRKCE). A Nuclear localization signal motif is present at residues 257 to 262 (KKKRKR). The Zn(2+) site is built by C263, C266, C269, C275, C278, C281, C291, and C296.

Interacts with DVL1. Interacts with RBPJ.

The protein resides in the nucleus. The protein localises to the cytoplasm. Functionally, may indirectly participate in activation of the NF-kappa-B and MAPK pathways. Acts as a mediator of BMP4-mediated modulation of canonical Wnt signaling activity in neural stem cells. Required for DNA damage-induced ATM phosphorylation, p53 activation and cell cycle arrest. Involved in myelopoiesis. Binds to the oxygen responsive element of COX4I2 and represses its transcription under hypoxia conditions (4% oxygen), as well as normoxia conditions (20% oxygen). May repress COX4I2 transactivation induced by CHCHD2 and RBPJ. Binds preferentially to DNA containing cytidine-phosphate-guanosine (CpG) dinucleotides over CpH (H=A, T, and C), hemimethylated-CpG and hemimethylated-hydroxymethyl-CpG. The sequence is that of CXXC-type zinc finger protein 5 (CXXC5) from Pongo abelii (Sumatran orangutan).